The sequence spans 283 residues: MTASHGQAAAIPTVTLNDDNTLPVVGIGVGELSDSEAERSVSAALEAGYRLIDTAAAYGNEAAVGRAIAASGIPRDEIYVTTKLATPDQGFTSSQAAARASLERLGLDYVDLYLIHWPGGDTSKYVDSWGGLMKVKEDGIARSIGVCNFGAEDLETIVSLTYFTPAVNQIELHPLLNQAALREVNAGYNIVTEAYGPLGVGRLLDHPAVTAIAEAHGRTAAQVLLRWSIQLGNVVISRSANPERIASNLDVFGFELTADEMETLNGLDDGTRFRPDPATYTGS.

Y58 serves as the catalytic Proton donor. The NADPH site is built by G196, L198, V200, I236, R238, S239, A240, R244, S247, N248, and R274.

This sequence belongs to the aldo/keto reductase family. As to quaternary structure, monomer.

Inhibited by the antituberculosis drug isoniazid (INH). Its function is as follows. Catalyzes the NADPH-dependent reduction of dicarbonyls. Exhibits narrow substrate specificity, with preferential activity against the dicarbonyl substrates phenylglyoxal and methylglyoxal. Exhibits weak activity with ethyl-2-methyl acetoacetate. Cannot use NADH. May play an important role in the detoxification of methylglyoxal. This chain is Aldo-keto reductase MSMEG_2407/MSMEI_2346, found in Mycolicibacterium smegmatis (strain ATCC 700084 / mc(2)155) (Mycobacterium smegmatis).